The primary structure comprises 76 residues: Conopeptide X11.1 (76 aa).

The N-terminal stretch at 1–20 is a signal peptide; sequence MMKLSVSFLLLLMLLPFITG. Positions 21–39 are excised as a propeptide; it reads EENSDSDVLKSGAAVRQGR. Intrachain disulfides connect cysteine 42/cysteine 56, cysteine 49/cysteine 61, cysteine 55/cysteine 66, and cysteine 60/cysteine 73.

In terms of tissue distribution, expressed by the venom duct.

It is found in the secreted. Antimicrobial peptide that potently inhibits growth of Mycobacterium tuberculosis (H37Rv strain) (MIC=3 uM). This Conasprella ximenes (Interrupted cone) protein is Conopeptide X11.1.